Reading from the N-terminus, the 883-residue chain is DNA mismatch repair protein MutS (883 aa).

An ATP-binding site is contributed by 619–626; sequence GPNMGGKS.

The protein belongs to the DNA mismatch repair MutS family.

Its function is as follows. This protein is involved in the repair of mismatches in DNA. It is possible that it carries out the mismatch recognition step. This protein has a weak ATPase activity. In Marinomonas sp. (strain MWYL1), this protein is DNA mismatch repair protein MutS.